We begin with the raw amino-acid sequence, 1533 residues long: DNA topoisomerase 2-alpha (1533 aa).

Residue Met1 is modified to N-acetylmethionine. The segment at 1–22 (MEVSPLQPVNENMQVNKTKKNE) is disordered. At Ser4 the chain carries Phosphoserine. Over residues 7 to 16 (QPVNENMQVN) the composition is skewed to polar residues. Lys17 is covalently cross-linked (Glycyl lysine isopeptide (Lys-Gly) (interchain with G-Cter in SUMO2)). Residues Asn91, Asn120, and 148–150 (SSN) each bind ATP. Glycyl lysine isopeptide (Lys-Gly) (interchain with G-Cter in SUMO2) cross-links involve residues Lys156 and Lys157. Position 161–168 (161–168 (GRNGYGAK)) interacts with ATP. A Glycyl lysine isopeptide (Lys-Gly) (interchain with G-Cter in SUMO2) cross-link involves residue Lys261. Thr282 carries the post-translational modification Phosphothreonine. Positions 342–344 (KKK) are interaction with DNA. Lys352 participates in a covalent cross-link: Glycyl lysine isopeptide (Lys-Gly) (interchain with G-Cter in SUMO2). 376-378 (QTK) lines the ATP pocket. Residues Lys386, Lys397, Lys416, Lys418, Lys425, and Lys440 each participate in a glycyl lysine isopeptide (Lys-Gly) (interchain with G-Cter in SUMO2) cross-link. Residues 455–572 (CTLILTEGDS…SLLRHRFLEE (118 aa)) form the Toprim domain. Mg(2+) is bound at residue Glu461. Glycyl lysine isopeptide (Lys-Gly) (interchain with G-Cter in SUMO2) cross-links involve residues Lys466, Lys480, and Lys529. Mg(2+) contacts are provided by Asp541 and Asp543. Residues Lys584, Lys599, Lys614, Lys622, Lys625, Lys632, Lys639, Lys655, Lys662, and Lys676 each participate in a glycyl lysine isopeptide (Lys-Gly) (interchain with G-Cter in SUMO2) cross-link. A Topo IIA-type catalytic domain is found at 715–1171 (IPSMVDGLKP…SPSDLWKEDL (457 aa)). The active-site O-(5'-phospho-DNA)-tyrosine intermediate is Tyr805. An interaction with DNA region spans residues 990–999 (KLQTSLTCNS). Lys1075 participates in a covalent cross-link: Glycyl lysine isopeptide (Lys-Gly) (interchain with G-Cter in SUMO2). 2 disordered regions span residues 1090 to 1121 (WKEA…VADS) and 1183 to 1215 (AKEK…PSPC). Residues 1099 to 1108 (DEEENEESDN) are compositionally biased toward acidic residues. A Phosphoserine; by CK1 modification is found at Ser1106. Residues Lys1114, Lys1196, and Lys1204 each participate in a glycyl lysine isopeptide (Lys-Gly) (interchain with G-Cter in SUMO2) cross-link. A Phosphothreonine modification is found at Thr1205. Residue Ser1213 is modified to Phosphoserine. Residue Lys1228 forms a Glycyl lysine isopeptide (Lys-Gly) (interchain with G-Cter in SUMO2) linkage. The interval 1231-1533 (AEKKIKKKIK…LEESDEDDLF (303 aa)) is disordered. Lys1240 participates in a covalent cross-link: Glycyl lysine isopeptide (Lys-Gly) (interchain with G-Cter in SUMO1); alternate. Residue Lys1240 forms a Glycyl lysine isopeptide (Lys-Gly) (interchain with G-Cter in SUMO2); alternate linkage. The residue at position 1244 (Thr1244) is a Phosphothreonine. Ser1247 bears the Phosphoserine mark. A compositionally biased stretch (basic and acidic residues) spans 1256-1272 (EGLKQRLEKKQKREPGT). Residues Lys1259, Lys1276, Lys1283, and Lys1286 each participate in a glycyl lysine isopeptide (Lys-Gly) (interchain with G-Cter in SUMO2) cross-link. Residues Ser1295, Ser1297, Ser1299, and Ser1302 each carry the phosphoserine modification. Thr1327 carries the phosphothreonine modification. Phosphoserine occurs at positions 1332 and 1337. Residue Thr1343 is modified to Phosphothreonine. A phosphoserine mark is found at Ser1351 and Ser1354. Residues 1360–1371 (TSPKHTNKEPKP) show a composition bias toward basic and acidic residues. Residues Lys1363, Lys1367, and Lys1373 each participate in a glycyl lysine isopeptide (Lys-Gly) (interchain with G-Cter in SUMO2) cross-link. Phosphoserine occurs at positions 1374 and 1377. A Glycyl lysine isopeptide (Lys-Gly) (interchain with G-Cter in SUMO2) cross-link involves residue Lys1387. Phosphoserine is present on residues Ser1393 and Ser1395. Over residues 1409-1433 (KPVSKKNVTVKKTAAKSQSSTSTTG) the composition is skewed to low complexity. A Glycyl lysine isopeptide (Lys-Gly) (interchain with G-Cter in SUMO2); alternate cross-link involves residue Lys1424. Lys1424 is modified (N6-acetyllysine; alternate). Positions 1435 to 1441 (KKRAAPK) are interaction with PLSCR1. Positions 1443–1455 (AKKDPDLDSDVSK) are enriched in basic and acidic residues. Lys1444 participates in a covalent cross-link: Glycyl lysine isopeptide (Lys-Gly) (interchain with G-Cter in SUMO2); alternate. Position 1444 is an N6-acetyllysine; alternate (Lys1444). At Ser1451 the chain carries Phosphoserine. Glycyl lysine isopeptide (Lys-Gly) (interchain with G-Cter in SUMO2) cross-links involve residues Lys1456 and Lys1461. Ser1471 carries the phosphoserine modification. Position 1472 is a phosphothreonine (Thr1472). Phosphoserine is present on residues Ser1473, Ser1476, and Ser1478. Residues Lys1486 and Lys1494 each participate in a glycyl lysine isopeptide (Lys-Gly) (interchain with G-Cter in SUMO2) cross-link. Residues 1493 to 1504 (PKGESDDFHLDL) show a composition bias toward basic and acidic residues. Phosphoserine is present on residues Ser1497 and Ser1527.

The protein belongs to the type II topoisomerase family. Homodimer. Interacts with COPS5. Interacts with RECQL5; this stimulates DNA decatenation. Interacts with SETMAR; stimulates the topoisomerase activity. Interacts with DHX9; this interaction occurs in a E2 enzyme UBE2I- and RNA-dependent manner, negatively regulates DHX9-mediated double-stranded DNA and RNA duplex helicase activity and stimulates TOP2A-mediated supercoiled DNA relaxation activity. Interacts with HNRNPU (via C-terminus); this interaction protects the topoisomerase TOP2A from degradation and positively regulates the relaxation of supercoiled DNA in a RNA-dependent manner. Interacts with MCM3AP. Interacts with ERCC6. Interacts with PLSCR1. Interacts with GCNA; this interaction allows the resolution of topoisomerase II (TOP2A) DNA-protein cross-links. Interacts with POL1RA/RPA1 (via dock II) and UBTF in the context of Pol I complex; may assist Pol I transcription initiation by releasing supercoils occurring during DNA unwinding. Interacts with TPRN; TPRN interacts with a number of DNA damage response proteins, is recruited to sites of DNA damage and may play a role in DNA damage repair. Mg(2+) is required as a cofactor. The cofactor is Mn(2+). Requires Ca(2+) as cofactor. Phosphorylation has no effect on catalytic activity. However, phosphorylation at Ser-1106 by CSNK1D/CK1 promotes DNA cleavable complex formation.

It is found in the cytoplasm. Its subcellular location is the nucleus. It localises to the nucleoplasm. The protein resides in the nucleolus. The catalysed reaction is ATP-dependent breakage, passage and rejoining of double-stranded DNA.. Its function is as follows. Key decatenating enzyme that alters DNA topology by binding to two double-stranded DNA molecules, generating a double-stranded break in one of the strands, passing the intact strand through the broken strand, and religating the broken strand. May play a role in regulating the period length of BMAL1 transcriptional oscillation. The sequence is that of DNA topoisomerase 2-alpha (TOP2A) from Sus scrofa (Pig).